We begin with the raw amino-acid sequence, 251 residues long: Aspartate/glutamate leucyltransferase (251 aa).

This sequence belongs to the R-transferase family. Bpt subfamily.

The protein localises to the cytoplasm. The enzyme catalyses N-terminal L-glutamyl-[protein] + L-leucyl-tRNA(Leu) = N-terminal L-leucyl-L-glutamyl-[protein] + tRNA(Leu) + H(+). It carries out the reaction N-terminal L-aspartyl-[protein] + L-leucyl-tRNA(Leu) = N-terminal L-leucyl-L-aspartyl-[protein] + tRNA(Leu) + H(+). Functionally, functions in the N-end rule pathway of protein degradation where it conjugates Leu from its aminoacyl-tRNA to the N-termini of proteins containing an N-terminal aspartate or glutamate. The sequence is that of Aspartate/glutamate leucyltransferase from Stenotrophomonas maltophilia (strain R551-3).